The primary structure comprises 350 residues: Small ribosomal subunit biogenesis GTPase RsgA (350 aa).

Residues 1-17 (MSKNKLSKGQQRRVNAN) show a composition bias toward polar residues. The interval 1–24 (MSKNKLSKGQQRRVNANHQRRLKT) is disordered. The 170-residue stretch at 104-273 (TSVLTRPDFY…VIDSPGVREF (170 aa)) folds into the CP-type G domain. GTP contacts are provided by residues 160 to 163 (NKID) and 214 to 222 (GQSGVGKSS). Zn(2+)-binding residues include C297, C302, H304, and C310.

Belongs to the TRAFAC class YlqF/YawG GTPase family. RsgA subfamily. In terms of assembly, monomer. Associates with 30S ribosomal subunit, binds 16S rRNA. Zn(2+) is required as a cofactor.

It localises to the cytoplasm. In terms of biological role, one of several proteins that assist in the late maturation steps of the functional core of the 30S ribosomal subunit. Helps release RbfA from mature subunits. May play a role in the assembly of ribosomal proteins into the subunit. Circularly permuted GTPase that catalyzes slow GTP hydrolysis, GTPase activity is stimulated by the 30S ribosomal subunit. In Salmonella schwarzengrund (strain CVM19633), this protein is Small ribosomal subunit biogenesis GTPase RsgA.